Reading from the N-terminus, the 233-residue chain is MTSKIIVALDYEKEEEALCLVDQIDPSLCRLKVGKEMFTTLGTKFVKALHDRNFDVFLDLKFHDIPNTVARAVRSAADLGVWMVDLHASGGLRMMEEAKKILEPYGKDAPLLISVTVLTSMEDLDLLQIGINASPMEQVIRLANLTQRAGLDGVVCSPQEVEILRANCGKDFKLITPGIRPIGSDFGDQRRVMTPAGAIQAGSDYLVIGRPITQADNPAEVLKSINASLPVNR.

Substrate-binding positions include Asp-10, Lys-32, 59 to 68 (DLKFHDIPNT), Thr-119, Arg-180, Gln-189, Gly-209, and Arg-210. Catalysis depends on Lys-61, which acts as the Proton donor.

It belongs to the OMP decarboxylase family. Type 1 subfamily. Homodimer.

It carries out the reaction orotidine 5'-phosphate + H(+) = UMP + CO2. The protein operates within pyrimidine metabolism; UMP biosynthesis via de novo pathway; UMP from orotate: step 2/2. Catalyzes the decarboxylation of orotidine 5'-monophosphate (OMP) to uridine 5'-monophosphate (UMP). The polypeptide is Orotidine 5'-phosphate decarboxylase (Pasteurella multocida (strain Pm70)).